A 346-amino-acid chain; its full sequence is Tetraacyldisaccharide 4'-kinase (346 aa).

54–61 (TVGGAGKT) is an ATP binding site.

This sequence belongs to the LpxK family.

It carries out the reaction a lipid A disaccharide + ATP = a lipid IVA + ADP + H(+). The protein operates within glycolipid biosynthesis; lipid IV(A) biosynthesis; lipid IV(A) from (3R)-3-hydroxytetradecanoyl-[acyl-carrier-protein] and UDP-N-acetyl-alpha-D-glucosamine: step 6/6. In terms of biological role, transfers the gamma-phosphate of ATP to the 4'-position of a tetraacyldisaccharide 1-phosphate intermediate (termed DS-1-P) to form tetraacyldisaccharide 1,4'-bis-phosphate (lipid IVA). This chain is Tetraacyldisaccharide 4'-kinase, found in Rhizobium etli (strain ATCC 51251 / DSM 11541 / JCM 21823 / NBRC 15573 / CFN 42).